The primary structure comprises 212 residues: Deoxyribose-phosphate aldolase (212 aa).

The Proton donor/acceptor role is filled by aspartate 89. The active-site Schiff-base intermediate with acetaldehyde is lysine 151. Lysine 180 acts as the Proton donor/acceptor in catalysis.

This sequence belongs to the DeoC/FbaB aldolase family. DeoC type 1 subfamily.

Its subcellular location is the cytoplasm. The catalysed reaction is 2-deoxy-D-ribose 5-phosphate = D-glyceraldehyde 3-phosphate + acetaldehyde. Its pathway is carbohydrate degradation; 2-deoxy-D-ribose 1-phosphate degradation; D-glyceraldehyde 3-phosphate and acetaldehyde from 2-deoxy-alpha-D-ribose 1-phosphate: step 2/2. Functionally, catalyzes a reversible aldol reaction between acetaldehyde and D-glyceraldehyde 3-phosphate to generate 2-deoxy-D-ribose 5-phosphate. This is Deoxyribose-phosphate aldolase from Clostridium botulinum (strain ATCC 19397 / Type A).